Here is a 202-residue protein sequence, read N- to C-terminus: Heart- and neural crest derivatives-expressed protein 1 (202 aa).

The region spanning 83 to 135 (RKGVGGPKKERRRTESINSAFAELRECIPNVPADTKLSKIKTLRLATSYIAYL) is the bHLH domain. Residues 143–187 (SQPGEPEGFKAELKKADGRENKRKRETQPEVYSQPLAHGEKKLKG) are disordered. The segment covering 149 to 162 (EGFKAELKKADGRE) has biased composition (basic and acidic residues).

Efficient DNA binding requires dimerization with another bHLH protein.

It localises to the nucleus. Its subcellular location is the nucleoplasm. The protein resides in the nucleolus. Functionally, transcription factor. Plays an essential role in cardiac morphogenesis. The polypeptide is Heart- and neural crest derivatives-expressed protein 1 (HAND1) (Gallus gallus (Chicken)).